The chain runs to 667 residues: Zeaxanthin epoxidase, chloroplastic (667 aa).

The N-terminal 59 residues, 1-59, are a transit peptide targeting the chloroplast; the sequence is MGSTPFCYSINPSPSKLDFTRTHVFSPVSKQFYLDLSSFSGKPGGVSGFRSRRALLGVK. FAD-binding positions include 82–110 and 360–373; these read RVLVAGGGIGGLVFALAAKKKGFDVLVFE and GFTWGKGRVTLLGD. Positions 558 to 612 constitute an FHA domain; sequence CIVGSEPDQDFPGMRIVIPSSQVSKMHARVIYKDGAFFLMDLRSEHGTYVTDNEG.

FAD serves as cofactor. Expressed in leaves, stems and flowers, and at lower levels in roots and siliques.

Its subcellular location is the plastid. It localises to the chloroplast. The enzyme catalyses all-trans-zeaxanthin + 4 reduced [2Fe-2S]-[ferredoxin] + 2 O2 + 4 H(+) = all-trans-violaxanthin + 4 oxidized [2Fe-2S]-[ferredoxin] + 2 H2O. It participates in plant hormone biosynthesis; abscisate biosynthesis. Zeaxanthin epoxidase that plays an important role in the xanthophyll cycle and abscisic acid (ABA) biosynthesis. Converts zeaxanthin into antheraxanthin and subsequently violaxanthin. Required for resistance to osmotic and drought stresses, ABA-dependent stomatal closure, seed development and dormancy, modulation of defense gene expression and disease resistance and non-photochemical quencing (NPQ). Through its role in ABA biosynthesis, regulates the expression of stress-responsive genes such as RD29A during osmotic stress and is required for normal plant growth during vegetative development. Is required for late skotomorphogenic growth through its role in the xanthophyll carotenoids neoxanthin, violaxanthin and antheraxanthin biosynthesis. Required for beta-aminobutyric acid (BABA)-induced priming in disease resistance, tolerance to salt and drought stresses and sterility. Participates in NPQ by regulating the level of zeaxanthin in photosynthetic energy conversion. NPQ is a process that maintains the balance between dissipation and utilization of light energy to minimize the generation of oxidizing molecules and the molecular damages they can generate. The sequence is that of Zeaxanthin epoxidase, chloroplastic (ZEP) from Arabidopsis thaliana (Mouse-ear cress).